Consider the following 89-residue polypeptide: Small ribosomal subunit protein uS14A (89 aa).

This sequence belongs to the universal ribosomal protein uS14 family. In terms of assembly, part of the 30S ribosomal subunit. Contacts proteins S3 and S10.

Binds 16S rRNA, required for the assembly of 30S particles and may also be responsible for determining the conformation of the 16S rRNA at the A site. This is Small ribosomal subunit protein uS14A from Bacillus velezensis (strain DSM 23117 / BGSC 10A6 / LMG 26770 / FZB42) (Bacillus amyloliquefaciens subsp. plantarum).